Here is a 624-residue protein sequence, read N- to C-terminus: LGDVPGTSGAVFVARPESKSPDRFGLFGAPPLEEGYVILVGDENLKQFPPPSKFLPSVWNRSRAARLVCCSIVLCCLCLAVFLYWSENMGQTVTTPLSLTLDHWKDVERTAHNQSVDVKKRRWVTFCSVEWPTFNVGWPQDGTFNRDIITQVKIKVFSPGPHGHPDQVPYIVTWEALAFDPPPWVKPFVHPKPPLPPSAPSLLPEPPLSTSPRSSLYPALTPSLGAKPKPQVLPDSGGPLIDLLTEDPPPYRDPGPPPSDRDRDDGEAAPAGEAPDPSPMASRLRGRRELPVADSTTSQAFPLRSGGNGQLQYWPFSSSDLYNWKNNNPSFSEDPGKLTALIESVLLTHQPTWDDCQQLLGTLLTGEEKQRVLLEARKAVRGEDGRPTQLPNEINDAFPLERPDWDYNTQRGRNHLVLYRQLLLAGLQNAGRSPTNLAKVKGITQGPNESPSAFLERLKEAYRRYTPYDPEDPGQETNVSMSFIWQSAPDIGRKLERLEDLKSKTLGDLVREAEKIFNKRETPEEREERIKRETEEKEERRRAEDEQKEKERDRRRHREMSKLLATVVSGQKQDRQGGERRRPQLDKDQCAYCKEKGHWAKDCPKKPRGPRGPRPQTSLLALDD.

Topologically, residues 1–63 (LGDVPGTSGA…FLPSVWNRSR (63 aa)) are cytoplasmic. A helical membrane pass occupies residues 64–86 (AARLVCCSIVLCCLCLAVFLYWS). Topologically, residues 87–624 (ENMGQTVTTP…PQTSLLALDD (538 aa)) are extracellular. Asn-113 is a glycosylation site (N-linked (GlcNAc...) asparagine; by host). 2 stretches are compositionally biased toward pro residues: residues 200–209 (PSLLPEPPLS) and 247–258 (DPPPYRDPGPPP). Disordered stretches follow at residues 200-284 (PSLL…ASRL) and 290-309 (LPVADSTTSQAFPLRSGGNG). N-linked (GlcNAc...) asparagine; by host glycosylation is present at Asn-478. Basic and acidic residues-rich tracts occupy residues 520-552 (RETPEEREERIKRETEEKEERRRAEDEQKEKER) and 572-605 (KQDRQGGERRRPQLDKDQCAYCKEKGHWAKDCPK). The interval 520–624 (RETPEEREER…PQTSLLALDD (105 aa)) is disordered.

In terms of processing, glycosylated by host. Post-translationally, cleaved by host near the middle of the molecule, releasing the c-terminal half containing capsid and nucleoprotein domains op GAG.

The protein resides in the host cell membrane. Functionally, plays a role in viral particle release. Presumably acts by facilitating the fission of the virion bud at the cell surface. May prevent the antiviral activity of murine APOBEC3. The polypeptide is Glyco-Gag protein (Mus musculus (Mouse)).